The following is a 194-amino-acid chain: Large ribosomal subunit protein bL17 (194 aa).

Residues 126 to 194 form a disordered region; it reads AEPKQTKART…SPEQTNKQEE (69 aa). Residues 131 to 140 show a composition bias toward basic residues; it reads TKARTRRGKG. 2 stretches are compositionally biased toward polar residues: residues 144 to 161 and 181 to 194; these read ATTT…QDMA and LDTQ…KQEE.

Belongs to the bacterial ribosomal protein bL17 family. As to quaternary structure, part of the 50S ribosomal subunit. Contacts protein L32.

This Amoebophilus asiaticus (strain 5a2) protein is Large ribosomal subunit protein bL17.